Reading from the N-terminus, the 299-residue chain is 4-diphosphocytidyl-2-C-methyl-D-erythritol kinase (299 aa).

K33 is a catalytic residue. ATP is bound at residue 115–125 (PLASGLGGGSS). Residue D154 is part of the active site.

Belongs to the GHMP kinase family. IspE subfamily.

It carries out the reaction 4-CDP-2-C-methyl-D-erythritol + ATP = 4-CDP-2-C-methyl-D-erythritol 2-phosphate + ADP + H(+). It participates in isoprenoid biosynthesis; isopentenyl diphosphate biosynthesis via DXP pathway; isopentenyl diphosphate from 1-deoxy-D-xylulose 5-phosphate: step 3/6. Catalyzes the phosphorylation of the position 2 hydroxy group of 4-diphosphocytidyl-2C-methyl-D-erythritol. The chain is 4-diphosphocytidyl-2-C-methyl-D-erythritol kinase from Deinococcus geothermalis (strain DSM 11300 / CIP 105573 / AG-3a).